The chain runs to 339 residues: MIAEADMEVCRELIRTGSYSFHAASRVLPARVRDPALALYAFCRVADDEVDEVGAPRDKAAAVLKLGDRLEDIYAGRPRNAPSDRAFAAVVEEFEMPRELPEALLEGFAWDAEGRWYHTLSDVQAYSARVAAAVGAMMCVLMRVRNPDALARACDLGLAMQMSNIARDVGEDARAGRLFLPTDWMVEEGIDPQAFLADPQPTKGIRRVTERLLNRADRLYWRAATGVRLLPFDCRPGIMAAGKIYAAIGAEVAKAKYDNITRRAHTTKGRKLWLVANSAMSATATSMLPLSPRVHAKPEPEVAHLVDAAAHRNLHPERSEVLISALMALKARDRGLAMD.

Belongs to the phytoene/squalene synthase family. Requires ATP as cofactor. Mn(2+) is required as a cofactor. It depends on Mg(2+) as a cofactor.

It participates in carotenoid biosynthesis; phytoene biosynthesis. Its function is as follows. Involved in the biosynthesis of carotenoids. Catalyzes the condensation of two molecules of geranylgeranyl diphosphate (GGPP) to give prephytoene diphosphate (PPPP) and the subsequent rearrangement of the cyclopropylcarbinyl intermediate to yield phytoene. The protein is Phytoene synthase (crtB) of Rhodobacter capsulatus (strain ATCC BAA-309 / NBRC 16581 / SB1003).